Consider the following 238-residue polypeptide: Fatty acid metabolism regulator protein (238 aa).

The HTH gntR-type domain occupies 6-74; that stretch reads KGPASFAEKY…HGKPTRVNNF (69 aa). The H-T-H motif DNA-binding region spans 34 to 53; sequence ERELSELIGVTRTTLREVLQ.

As to quaternary structure, homodimer.

The protein localises to the cytoplasm. Multifunctional regulator of fatty acid metabolism. This is Fatty acid metabolism regulator protein from Shewanella baltica (strain OS185).